We begin with the raw amino-acid sequence, 147 residues long: Insertion element IS402 uncharacterized 16.2 kDa protein (147 aa).

Residues 106 to 147 form a disordered region; sequence DSSSIRAVGAGQKLGQTPPIARDPVPSTTSSPTPTVRRSPRS. Residues 129-147 are compositionally biased toward low complexity; that stretch reads PVPSTTSSPTPTVRRSPRS.

Belongs to the transposase 6 family.

In Burkholderia cepacia (Pseudomonas cepacia), this protein is Insertion element IS402 uncharacterized 16.2 kDa protein.